Reading from the N-terminus, the 296-residue chain is MTSFLSFSAISAHPPTFSGASFRPRSFSPRLFKSCVKCTYAEAGLSSASWSAPIDIVADVKSERVVVLGGNGFVGSAICKAAISNGIEVVSVSRSGRPNFEDSWLDQVTWVTGDVFYLNWDEVLLGATAVVSTIGGFGNEEQMKRINGEANVTAVNAAKDFGVPKFVLITVHDYNLPPFILSNGYFTGKRNAEAELLSKYPTSGVVLRPGFIYGKRKVNGIEVPLDLVGEPLDKIYDSAERFIRPLRSLPASDLILAPPVNVDDLALAVINAVKDDDFFGIFTIEQIKEAAAKMRA.

The transit peptide at 1-57 (MTSFLSFSAISAHPPTFSGASFRPRSFSPRLFKSCVKCTYAEAGLSSASWSAPIDIV) directs the protein to the chloroplast.

Belongs to the NAD(P)-dependent epimerase/dehydratase family.

The protein resides in the plastid. The protein localises to the chloroplast. It localises to the plastoglobule. This is an uncharacterized protein from Arabidopsis thaliana (Mouse-ear cress).